Consider the following 282-residue polypeptide: 3-methyl-2-oxobutanoate hydroxymethyltransferase (282 aa).

Mg(2+)-binding residues include aspartate 63 and aspartate 102. Residues 63 to 64 (DS), aspartate 102, and lysine 132 contribute to the 3-methyl-2-oxobutanoate site. Glutamate 134 serves as a coordination point for Mg(2+). Catalysis depends on glutamate 200, which acts as the Proton acceptor.

Belongs to the PanB family. In terms of assembly, homodecamer; pentamer of dimers. Requires Mg(2+) as cofactor.

Its subcellular location is the cytoplasm. The enzyme catalyses 3-methyl-2-oxobutanoate + (6R)-5,10-methylene-5,6,7,8-tetrahydrofolate + H2O = 2-dehydropantoate + (6S)-5,6,7,8-tetrahydrofolate. The protein operates within cofactor biosynthesis; (R)-pantothenate biosynthesis; (R)-pantoate from 3-methyl-2-oxobutanoate: step 1/2. Its function is as follows. Catalyzes the reversible reaction in which hydroxymethyl group from 5,10-methylenetetrahydrofolate is transferred onto alpha-ketoisovalerate to form ketopantoate. The chain is 3-methyl-2-oxobutanoate hydroxymethyltransferase from Mycobacterium sp. (strain JLS).